We begin with the raw amino-acid sequence, 790 residues long: Protein sel-1 homolog 1 (790 aa).

Residues 1 to 21 (MQVRVRLSLLLLCAVLLGSAA) form the signal peptide. Residues 22–51 (ATSDDKTNQDDSLDSKSSLPTDESVKDHTT) are disordered. The Lumenal segment spans residues 22–734 (ATSDDKTNQD…LFTQLDMDQL (713 aa)). Residues 23-733 (TSDDKTNQDD…DLFTQLDMDQ (711 aa)) are interaction with ERLEC1, OS9 and SYVN1. Ser-64 carries the post-translational modification Phosphoserine. Residues 67 to 78 (AEVESLLQDEED) show a composition bias toward acidic residues. The segment at 67 to 98 (AEVESLLQDEEDSSKTQEEEISFLESPNPSSK) is disordered. The region spanning 118–166 (AHGEPCHFPFLFLDKEYDECTSDGREDGRLWCATTYDYKTDEKWGFCET) is the Fibronectin type-II domain. 2 disulfide bridges follow: Cys-123–Cys-149 and Cys-137–Cys-164. Sel1-like repeat units lie at residues 179–214 (AEMI…GMNH), 215–250 (TKAL…EEGS), 251–286 (PKGQ…LGGN), 287–322 (LIAH…NHVA), 369–405 (VQAQ…NAGN), 406–442 (SHAM…DMGN), 443–478 (PVGQ…EQGW), 479–514 (VDGQ…QGGH), and 515–550 (ILAF…ERGR). N-linked (GlcNAc...) asparagine glycosylation is found at Asn-191 and Asn-213. Residue Asn-268 is glycosylated (N-linked (GlcNAc...) asparagine). The important for homodimerization and oligomerization stretch occupies residues 348 to 533 (NSGMLEEDLI…MHASGTGVMR (186 aa)). The N-linked (GlcNAc...) asparagine glycan is linked to Asn-427. A glycan (N-linked (GlcNAc...) asparagine) is linked at Asn-604. Sel1-like repeat units follow at residues 623 to 658 (TVAR…EQQH) and 660 to 695 (AQAM…EASP). The interval 639–719 (TDVDYETAFI…VVYFLQYIRE (81 aa)) is interaction with SYVN1. Residues 734–790 (LLGPEWDLYLMTIIALLLGTVIAYRQRQHQDIPVPRPPGPRPAPPQQEGPPEQQPPQ) are mediates retention in the endoplasmic reticulum. The chain crosses the membrane as a helical span at residues 735–755 (LGPEWDLYLMTIIALLLGTVI). Over 756–790 (AYRQRQHQDIPVPRPPGPRPAPPQQEGPPEQQPPQ) the chain is Cytoplasmic. A disordered region spans residues 763–790 (QDIPVPRPPGPRPAPPQQEGPPEQQPPQ). The span at 767–790 (VPRPPGPRPAPPQQEGPPEQQPPQ) shows a compositional bias: pro residues.

Belongs to the sel-1 family. As to quaternary structure, homodimer and homooligomer. May form a complex with ERLEC1, HSPA5, OS9, and SYVN1. Interacts with FOXRED2 and EDEM1. Interacts with LPL and LMF1; may stabilize the complex formed by LPL and LMF1 and thereby promote the export of LPL dimers. Component of the HRD1 complex, which comprises at least SYNV1/HRD1, DERL1/2, FAM8A1, HERPUD1/HERP, OS9, SEL1L and UBE2J1. SYNV1 assembles with SEL1L and FAM8A1 through its transmembrane domains, but interaction with its cytoplasmic domain is required to confer stability to FAM8A1 and enhance recruitment of HERPUD1. The interaction with SYNV1/HRD1 is direct. In terms of processing, N-glycosylated. As to expression, highly expressed in pancreas, white adipose tissue, liver and spleen (at protein level). Detected in heart, brain, spleen, lung, liver, kidney and testis.

It localises to the endoplasmic reticulum membrane. Functionally, plays a role in the endoplasmic reticulum quality control (ERQC) system also called ER-associated degradation (ERAD) involved in ubiquitin-dependent degradation of misfolded endoplasmic reticulum proteins. Enhances SYVN1 stability. Plays a role in LPL maturation and secretion. Required for normal differentiation of the pancreas epithelium, and for normal exocrine function and survival of pancreatic cells. May play a role in Notch signaling. This Mus musculus (Mouse) protein is Protein sel-1 homolog 1 (Sel1l).